Consider the following 214-residue polypeptide: Small ribosomal subunit protein uS5 (214 aa).

Residues 54-117 (LRYDIVDIGI…RDAKMRIIPV (64 aa)) form the S5 DRBM domain.

This sequence belongs to the universal ribosomal protein uS5 family. As to quaternary structure, part of the 30S ribosomal subunit. Contacts protein S4.

Functionally, with S4 and S12 plays an important role in translational accuracy. The protein is Small ribosomal subunit protein uS5 of Sulfolobus acidocaldarius (strain ATCC 33909 / DSM 639 / JCM 8929 / NBRC 15157 / NCIMB 11770).